A 1707-amino-acid chain; its full sequence is Histone-lysine N-methyltransferase SETD1A (1707 aa).

The interaction with WDR82 stretch occupies residues 60–89 (LQDPRCHVRSKNRDFSLPVPKFKLDEFYIG). The RRM domain occupies 84–172 (DEFYIGQIPL…NIIHAQLDIK (89 aa)). Disordered stretches follow at residues 194–308 (PTGG…YQDA), 331–363 (TAATASSSASSSSLSSSSSSSSSSSSSQFRSSD), 381–486 (SYPP…AQHS), 506–655 (LASD…PPPH), 834–854 (AKPFQNAAKQQAKEEDKEKTK), 891–1251 (PSFK…GTEV), and 1264–1293 (ARRGLPALPAVEDSEATETSDEAERPRPLL). Polar residues predominate over residues 239 to 277 (NGTPCSQDTSFSSSRQDTPSSFGQFTPQSSQGTPYTSRG). Composition is skewed to low complexity over residues 278-295 (STPYSQDSAYSSSTTSTS) and 331-357 (TAATASSSASSSSLSSSSSSSSSSSSS). A compositionally biased stretch (pro residues) spans 430-440 (SEAPPPEPPEP). Phosphoserine is present on residues S459 and S464. The span at 459 to 473 (SPRPASPARSGSPAP) shows a compositional bias: low complexity. Polar residues predominate over residues 474 to 486 (ETTNESVPFAQHS). Phosphoserine is present on residues S508 and S565. Residues 568-578 (ANGQNQASPCS) are compositionally biased toward polar residues. Pro residues-rich tracts occupy residues 593–617 (SPPPAPTPPQQPPPPPPPPPPPPPY) and 624–655 (GYPPHQPAYLLPPRPDGPPPPEYPPPPPPPPH). A compositionally biased stretch (basic and acidic residues) spans 844–854 (QAKEEDKEKTK). At S915 the chain carries Phosphoserine. 2 stretches are compositionally biased toward acidic residues: residues 918–927 (AEEDEDDPEQ) and 976–992 (KDEEDDEEDEEDEDREE). The segment covering 993–1002 (AVDTTKKETE) has biased composition (basic and acidic residues). Acidic residues predominate over residues 1003-1012 (VSDGEDEESD). Residues 1032–1060 (DSESSSSSSSSSSSSSSSSSSSSSSSSES) show a composition bias toward low complexity. Residues 1077-1094 (ASPPPREVPVPTPAPVEV) show a composition bias toward pro residues. A Phosphoserine modification is found at S1103. A compositionally biased stretch (pro residues) spans 1127-1145 (PSAPLRPPEPPAGPPAPAP). The span at 1275–1284 (EDSEATETSD) shows a compositional bias: acidic residues. An HCFC1-binding motif (HBM) motif is present at residues 1299–1303 (EHNYA). 2 disordered regions span residues 1307–1417 (KPTP…AYEP) and 1472–1499 (NLTTPKRKRRPQDGPREHQTGSARSEGY). The segment covering 1308-1323 (PTPPAPALRPPEPVPA) has biased composition (pro residues). Residues 1360 to 1377 (EGEEEGEEEGEEEEEESS) are compositionally biased toward acidic residues. Residues 1390–1403 (RRRSLRSHARRRRP) are compositionally biased toward basic residues. Pro residues predominate over residues 1404-1414 (PPPPPPPPPRA). The interaction with CFP1 stretch occupies residues 1415–1450 (YEPRSEFEQMTILYDIWNSGLDSEDMSYLRLTYERL). An interaction with ASH2L, RBBP5 and WDR5 region spans residues 1450-1537 (LLQQTSGADW…GTNRVLSERR (88 aa)). Positions 1492-1497 (GSARSE) match the WDR5 interaction motif (WIN) motif. The short motif at 1537–1542 (RSEQRR) is the RxxxRR motif element. Residues 1568–1685 (KKLRFGRSRI…VDEEITYDYK (118 aa)) form the SET domain. Residue Y1684 coordinates S-adenosyl-L-methionine. Residues 1691-1707 (NKIPCLCGTESCRGSLN) enclose the Post-SET domain.

It belongs to the class V-like SAM-binding methyltransferase superfamily. As to quaternary structure, component of the SET1A/COMPASS complex composed of the catalytic subunit SETD1A, WDR5, WDR82, RBBP5, ASH2L/ASH2, CXXC1/CFP1, HCFC1 and DPY30 homotrimer. Forms a core complex with the evolutionary conserved subcomplex WRAD composed of WDR5, RBBP5, ASH2L/ASH2 and DPY30 subunits; WRAD differentially stimulates the methyltransferase activity. Interacts with BOD1L1 (via COMPASS-Shg1 domain) at replication forks. Interacts with HCFC1. Interacts with ASH2/ASH2L. Interacts with CXXC1/CFP1. Interacts with RBBP5. Interacts (via N-terminal region) with WDR82; the interaction is direct. Interacts (via the RRM domain) with hyperphosphorylated C-terminal domain (CTD) of RNA polymerase II large subunit (POLR2A) only in the presence of WDR82. Binds specifically to CTD heptad repeats phosphorylated on 'Ser-5' of each heptad. Interacts with ZNF335. Interacts with SUPT6H. Interacts with NAP1L1. Interacts (via WIN motif) with WDR5.

The protein resides in the nucleus speckle. The protein localises to the chromosome. It localises to the cytoplasm. The catalysed reaction is L-lysyl(4)-[histone H3] + S-adenosyl-L-methionine = N(6)-methyl-L-lysyl(4)-[histone H3] + S-adenosyl-L-homocysteine + H(+). It catalyses the reaction N(6)-methyl-L-lysyl(4)-[histone H3] + S-adenosyl-L-methionine = N(6),N(6)-dimethyl-L-lysyl(4)-[histone H3] + S-adenosyl-L-homocysteine + H(+). It carries out the reaction N(6),N(6)-dimethyl-L-lysyl(4)-[histone H3] + S-adenosyl-L-methionine = N(6),N(6),N(6)-trimethyl-L-lysyl(4)-[histone H3] + S-adenosyl-L-homocysteine + H(+). Functionally, histone methyltransferase that catalyzes methyl group transfer from S-adenosyl-L-methionine to the epsilon-amino group of 'Lys-4' of histone H3 (H3K4) via a non-processive mechanism. Part of chromatin remodeling machinery, forms H3K4me1, H3K4me2 and H3K4me3 methylation marks at active chromatin sites where transcription and DNA repair take place. Responsible for H3K4me3 enriched promoters and transcriptional programming of inner mass stem cells and neuron progenitors during embryogenesis. Required for H3K4me1 mark at stalled replication forks. Mediates FANCD2-dependent nucleosome remodeling and RAD51 nucleofilaments stabilization at reversed forks, protecting them from nucleolytic degradation. Does not methylate 'Lys-4' of histone H3 if the neighboring 'Lys-9' residue is already methylated. Binds RNAs involved in RNA processing and the DNA damage response. This chain is Histone-lysine N-methyltransferase SETD1A (SETD1A), found in Homo sapiens (Human).